Here is a 99-residue protein sequence, read N- to C-terminus: MSNSDNTTFATRILDWYQIHGRKTLPWQQDKTPYRVWVSEIMLQQTQVATVIPYYQRFMARFPDVQALAQAPIDEVLHHWTGLGYYARARNLHKAAQQI.

Glu-40 acts as the Proton donor/acceptor in catalysis.

It belongs to the Nth/MutY family. In terms of assembly, monomer. [4Fe-4S] cluster serves as cofactor.

The catalysed reaction is Hydrolyzes free adenine bases from 7,8-dihydro-8-oxoguanine:adenine mismatched double-stranded DNA, leaving an apurinic site.. Adenine glycosylase active on G-A mispairs. MutY also corrects error-prone DNA synthesis past GO lesions which are due to the oxidatively damaged form of guanine: 7,8-dihydro-8-oxoguanine (8-oxo-dGTP). This is Adenine DNA glycosylase (mutY) from Aeromonas hydrophila.